Consider the following 169-residue polypeptide: MSQDFVEIAKIGATYKLNGELNLYSLANSIETLLSYGDWYIQLPATNVWQQLKGESVLKRADKVYIKLANINNADTAKKYVNALIGVPKRALPQLAEDEVYFKDLIGCSVKNINNDSFGVVVDIIETGANEVLVCKEDNSEYLIPYVKQYIVSEDLNSKKIVVDWEYDY.

A PRC barrel domain is found at Glu97–Tyr169.

The protein belongs to the RimM family. As to quaternary structure, binds ribosomal protein uS19.

It localises to the cytoplasm. In terms of biological role, an accessory protein needed during the final step in the assembly of 30S ribosomal subunit, possibly for assembly of the head region. Essential for efficient processing of 16S rRNA. May be needed both before and after RbfA during the maturation of 16S rRNA. It has affinity for free ribosomal 30S subunits but not for 70S ribosomes. The protein is Ribosome maturation factor RimM of Francisella tularensis subsp. tularensis (strain WY96-3418).